Consider the following 526-residue polypeptide: Cytochrome P450 monooxygenase ucsK (526 aa).

Residues 7-27 (PVLAAATAVSFGFYLAGLFVY) form a helical membrane-spanning segment. N-linked (GlcNAc...) asparagine glycosylation occurs at Asn403. Residue Cys467 coordinates heme.

The protein belongs to the cytochrome P450 family. It depends on heme as a cofactor.

It is found in the membrane. The protein operates within mycotoxin biosynthesis. Functionally, cytochrome P450 monooxygenase; part of the gene cluster that mediates the biosynthesis of UCS1025A, a member of the pyrrolizidinone family that acts as a strong telomerase inhibitor and displays potent antibacterial and antitumor properties. These compounds share a hemiaminal-containing pyrrolizidinone core fused with a gamma-lactone, giving a furopyrrolizidine that is connected to a decalin fragment. The polyketide synthase module (PKS) of the PKS-NRPS ucsA is responsible for the synthesis of the polyketide backbone via the condensation of an acetyl-CoA starter unit with 6 malonyl-CoA units. The downstream nonribosomal peptide synthetase (NRPS) module then amidates the carboxyl end of the polyketide with a 2S,3S-methylproline derived from L-isoleucine by the 2-oxoglutarate-dependent dioxygenase ucsF which converts L-isoleucine to (4S,5S)-4-methylpyrroline-5-carboxylate that is further converted to 2S,3S-methylproline by the pyrroline-5-carboxylate reductase ucsG. Reductive release of the completed aminoacyl polyketide from the assembly line can form the 3-pyrrolin-2-one structure via an intramolecular Knoevenagel reaction. Because ucsA lacks a designated enoylreductase (ER) domain, the required activity is provided the enoyl reductase ucsL. This keto acyclic precursor is the substrate of the Diels-Alderase ucsH, that catalyzes the Diels-Alder cycloaddition. Oxidation of the 3S-methyl group to a carboxylate by the cytochrome P450 monooxygenase ucsK allows an oxa-Michael cyclization that might involve the reductase/dehydrogenase ucsI and which furnishes the furopyrrolizidine. The oxidase ucsJ likely plays a critical role in stereoselective reduction of the C5-C6 double bond to afford the required R-configured carboxylate group. Further enolization and oxidation at C5 by an unidentified enzyme affords the last intermediate that can undergo oxa-Michael cyclization to yield UCS1025A. This chain is Cytochrome P450 monooxygenase ucsK, found in Acremonium sp.